We begin with the raw amino-acid sequence, 218 residues long: Fucoxanthin-chlorophyll a-c binding protein, chloroplastic (218 aa).

Residues 1 to 36 constitute a chloroplast transit peptide; sequence MFYSAAVAALMVGSASAFLAPAQFNSVAKSSGALSM.

It belongs to the fucoxanthin chlorophyll protein family. In terms of assembly, the LHC complex of chromophytic algae is composed of fucoxanthin, chlorophyll A and C bound non-covalently by fucoxanthin chlorophyll proteins (FCPs). The ratio of pigments in this LHC is; fucoxanthin: chlorophyll C: chlorophyll A; (0.6-1): (0.1-0.3): (1).

It localises to the plastid. It is found in the chloroplast thylakoid membrane. In terms of biological role, the light-harvesting complex (LHC) functions as a light receptor, it captures and delivers excitation energy to photosystems with which it is closely associated. Energy is transferred from the carotenoid and chlorophyll C (or B) to chlorophyll A and the photosynthetic reaction centers where it is used to synthesize ATP and reducing power. This is Fucoxanthin-chlorophyll a-c binding protein, chloroplastic from Chattonella marina var. antiqua (Red tide flagellate).